The sequence spans 628 residues: Chaperone protein HtpG (628 aa).

The tract at residues 1-337 is a; substrate-binding; it reads MSEKKYTFET…SADLPLNVSR (337 aa). A b region spans residues 338 to 554; sequence EILQHNKVID…DYGMSLHMQK (217 aa). The tract at residues 555 to 628 is c; the sequence is MMEEAGQSFM…FVKLVNKYIR (74 aa).

The protein belongs to the heat shock protein 90 family. Homodimer.

It is found in the cytoplasm. Molecular chaperone. Has ATPase activity. The sequence is that of Chaperone protein HtpG from Francisella tularensis subsp. tularensis (strain FSC 198).